Reading from the N-terminus, the 119-residue chain is NADH-quinone oxidoreductase subunit A (119 aa).

The next 3 membrane-spanning stretches (helical) occupy residues 7–27 (YPVL…VSIG), 63–83 (LVAI…PWGV), and 88–108 (IGWP…LGFA).

This sequence belongs to the complex I subunit 3 family. In terms of assembly, NDH-1 is composed of 14 different subunits. Subunits NuoA, H, J, K, L, M, N constitute the membrane sector of the complex.

It localises to the cell inner membrane. It carries out the reaction a quinone + NADH + 5 H(+)(in) = a quinol + NAD(+) + 4 H(+)(out). Its function is as follows. NDH-1 shuttles electrons from NADH, via FMN and iron-sulfur (Fe-S) centers, to quinones in the respiratory chain. The immediate electron acceptor for the enzyme in this species is believed to be ubiquinone. Couples the redox reaction to proton translocation (for every two electrons transferred, four hydrogen ions are translocated across the cytoplasmic membrane), and thus conserves the redox energy in a proton gradient. This Burkholderia ambifaria (strain MC40-6) protein is NADH-quinone oxidoreductase subunit A.